The chain runs to 627 residues: 1-deoxy-D-xylulose-5-phosphate synthase (627 aa).

Thiamine diphosphate is bound by residues His80 and 121–123 (GHS). Asp152 contacts Mg(2+). Thiamine diphosphate contacts are provided by residues 153–154 (GA), Asn181, Tyr288, and Glu370. Asn181 provides a ligand contact to Mg(2+).

Belongs to the transketolase family. DXPS subfamily. Homodimer. It depends on Mg(2+) as a cofactor. The cofactor is thiamine diphosphate.

It catalyses the reaction D-glyceraldehyde 3-phosphate + pyruvate + H(+) = 1-deoxy-D-xylulose 5-phosphate + CO2. It functions in the pathway metabolic intermediate biosynthesis; 1-deoxy-D-xylulose 5-phosphate biosynthesis; 1-deoxy-D-xylulose 5-phosphate from D-glyceraldehyde 3-phosphate and pyruvate: step 1/1. In terms of biological role, catalyzes the acyloin condensation reaction between C atoms 2 and 3 of pyruvate and glyceraldehyde 3-phosphate to yield 1-deoxy-D-xylulose-5-phosphate (DXP). This Aliivibrio salmonicida (strain LFI1238) (Vibrio salmonicida (strain LFI1238)) protein is 1-deoxy-D-xylulose-5-phosphate synthase.